Consider the following 360-residue polypeptide: uncharacterized protein (360 aa).

Residues 4–235 enclose the ABC transporter domain; sequence LSLQHIQKIY…PANMFVSGFI (232 aa). 37–44 serves as a coordination point for ATP; it reads GPSGCGKS.

The protein belongs to the ABC transporter superfamily.

This is an uncharacterized protein from Escherichia coli (strain K12).